Reading from the N-terminus, the 553-residue chain is Protein PALS2 (553 aa).

2 L27 domains span residues 1 to 48 (MQQV…EDSK) and 49 to 107 (LEAV…YDSP). In terms of domain architecture, PDZ spans 129 to 208 (ILGIHKKAGE…SVTLKILPSY (80 aa)). The SH3 domain occupies 228-297 (VRQVFVKCHF…PSQFLEEKRK (70 aa)). Residues 351-538 (RKTLVLIGAQ…AFEKLQTAIE (188 aa)) form the Guanylate kinase-like domain. Tyr-513 is modified (phosphotyrosine).

The protein belongs to the MAGUK family. As to quaternary structure, interacts with CADM1. Interacts with the LIN7 proteins.

The protein localises to the membrane. The polypeptide is Protein PALS2 (Mus musculus (Mouse)).